We begin with the raw amino-acid sequence, 279 residues long: Tryptophan 2,3-dioxygenase (279 aa).

Substrate is bound by residues 48-52, Tyr-110, and Arg-114; that span reads FIIQH. His-237 contributes to the heme binding site. Thr-251 provides a ligand contact to substrate.

The protein belongs to the tryptophan 2,3-dioxygenase family. As to quaternary structure, homotetramer. Heme is required as a cofactor.

The catalysed reaction is L-tryptophan + O2 = N-formyl-L-kynurenine. The protein operates within amino-acid degradation; L-tryptophan degradation via kynurenine pathway; L-kynurenine from L-tryptophan: step 1/2. Functionally, heme-dependent dioxygenase that catalyzes the oxidative cleavage of the L-tryptophan (L-Trp) pyrrole ring and converts L-tryptophan to N-formyl-L-kynurenine. Catalyzes the oxidative cleavage of the indole moiety. The sequence is that of Tryptophan 2,3-dioxygenase from Bradyrhizobium sp. (strain BTAi1 / ATCC BAA-1182).